The following is a 237-amino-acid chain: Pyridoxal phosphate homeostasis protein (237 aa).

Lys35 is modified (N6-(pyridoxal phosphate)lysine).

This sequence belongs to the pyridoxal phosphate-binding protein YggS/PROSC family.

Its function is as follows. Pyridoxal 5'-phosphate (PLP)-binding protein, which is involved in PLP homeostasis. The sequence is that of Pyridoxal phosphate homeostasis protein from Haemophilus influenzae (strain ATCC 51907 / DSM 11121 / KW20 / Rd).